The primary structure comprises 386 residues: Succinate--CoA ligase [ADP-forming] subunit beta (386 aa).

In terms of domain architecture, ATP-grasp spans 9–244; the sequence is KELFANYGVP…LDEEEPLEVE (236 aa). ATP contacts are provided by residues Lys-46, 53–55, Glu-99, Leu-102, and Glu-107; that span reads GRG. Mg(2+) is bound by residues Asn-199 and Asp-213. Substrate is bound by residues Asn-264 and 321-323; that span reads GIL.

Belongs to the succinate/malate CoA ligase beta subunit family. In terms of assembly, heterotetramer of two alpha and two beta subunits. Requires Mg(2+) as cofactor.

The catalysed reaction is succinate + ATP + CoA = succinyl-CoA + ADP + phosphate. The enzyme catalyses GTP + succinate + CoA = succinyl-CoA + GDP + phosphate. It functions in the pathway carbohydrate metabolism; tricarboxylic acid cycle; succinate from succinyl-CoA (ligase route): step 1/1. In terms of biological role, succinyl-CoA synthetase functions in the citric acid cycle (TCA), coupling the hydrolysis of succinyl-CoA to the synthesis of either ATP or GTP and thus represents the only step of substrate-level phosphorylation in the TCA. The beta subunit provides nucleotide specificity of the enzyme and binds the substrate succinate, while the binding sites for coenzyme A and phosphate are found in the alpha subunit. This Desulfatibacillum aliphaticivorans protein is Succinate--CoA ligase [ADP-forming] subunit beta.